A 51-amino-acid polypeptide reads, in one-letter code: UPF0181 protein HAPS_0710 (51 aa).

The protein belongs to the UPF0181 family.

The sequence is that of UPF0181 protein HAPS_0710 from Glaesserella parasuis serovar 5 (strain SH0165) (Haemophilus parasuis).